The primary structure comprises 315 residues: Olfactory receptor 3A1 (315 aa).

Over 1–28 the chain is Extracellular; the sequence is MQPESGANGTVIAEFILLGLLEAPGLQP. N-linked (GlcNAc...) asparagine glycosylation is present at asparagine 8. Residues 29–52 traverse the membrane as a helical segment; that stretch reads VVFVLFLFAYLVTVGGNLSILAAV. The Cytoplasmic segment spans residues 53 to 60; that stretch reads LVEPELHT. A helical transmembrane segment spans residues 61–82; it reads PMYFFLGNLSVLDVGCISVTVP. Residues 83 to 103 are Extracellular-facing; it reads SMLSRLLSRKRAVPCGACLTQ. Cysteine 100 and cysteine 192 are joined by a disulfide. Residues 104-123 form a helical membrane-spanning segment; the sequence is LFFFHLFVGVDCFLLIAMAY. Topologically, residues 124 to 143 are cytoplasmic; the sequence is DRFLAICRPLTYSTRMSQTV. A helical membrane pass occupies residues 144-161; it reads QRMLVAASWACAFTNALT. Residues 162-199 are Extracellular-facing; that stretch reads HTVAMSTLNFCGPNVINHFYCDLPQLCQLSCSSTQLSE. Residues 200 to 223 form a helical membrane-spanning segment; that stretch reads LLLFAVGFIMAGTSMALIVISYIH. Topologically, residues 224 to 240 are cytoplasmic; that stretch reads VAAAVLRIRSVEGRKKA. A helical transmembrane segment spans residues 241–264; the sequence is FSTCGSHLTVVAIFYGSGIFNYMR. Topologically, residues 265-275 are extracellular; sequence LGSTKLSDKDK. The chain crosses the membrane as a helical span at residues 276-295; the sequence is AVGIFNTVINPMLNPIIYSF. The Cytoplasmic portion of the chain corresponds to 296–315; the sequence is RNPDVQSAIWRMLTGRRSLA.

The protein belongs to the G-protein coupled receptor 1 family.

The protein resides in the cell membrane. Odorant receptor. The sequence is that of Olfactory receptor 3A1 (OR3A1) from Gorilla gorilla gorilla (Western lowland gorilla).